The sequence spans 1337 residues: Sister chromatid cohesion protein PDS5 homolog A (1337 aa).

Met1 is subject to N-acetylmethionine. The stretch at 393-429 (ALVNDQLLGFVRERTLDKRWRVRKEAMMGLAQLYKKY) is one HEAT repeat. A Phosphoserine modification is found at Ser1097. An N6-acetyllysine modification is found at Lys1146. Positions 1150–1337 (ATGRKPYVRS…PAERQIDLQR (188 aa)) are disordered. A compositionally biased stretch (polar residues) spans 1159-1180 (STGTETGSNINVNSELNPSTGN). Residue Ser1195 is modified to Phosphoserine. Thr1208 bears the Phosphothreonine mark. Position 1211 is an N6-acetyllysine (Lys1211). Residues 1223–1233 (SDQATQGNISS) show a composition bias toward polar residues. Lys1290 bears the N6-acetyllysine mark. Ser1305 carries the phosphoserine modification. Over residues 1321–1337 (DLAKKAAPAERQIDLQR) the composition is skewed to basic and acidic residues.

The protein belongs to the PDS5 family. As to quaternary structure, interacts with the cohesin complex. Interacts with WAPL (via FGF motifs) or CDCA5 (via the FGF motif); the interaction is direct, cohesin-dependent and competitive. Interacts with SMC3. Interacts with TP63. As to expression, highest level in colon. Low levels in lung, ovary, breast and kidney. Reduced level in renal tumor tissue. Isoform 2 is expressed in kidney.

The protein resides in the nucleus. Its function is as follows. Probable regulator of sister chromatid cohesion in mitosis which may stabilize cohesin complex association with chromatin. May couple sister chromatid cohesion during mitosis to DNA replication. Cohesion ensures that chromosome partitioning is accurate in both meiotic and mitotic cells and plays an important role in DNA repair. The chain is Sister chromatid cohesion protein PDS5 homolog A from Homo sapiens (Human).